Reading from the N-terminus, the 496-residue chain is Polyamine oxidase 6 (496 aa).

Residues 1 to 27 form the signal peptide; it reads MTKPTTMAIFLVLALSIAQLLPSLVAG. Residues E61 and R69 each coordinate FAD. N-linked (GlcNAc...) asparagine glycosylation is found at N103 and N150. V261 is an FAD binding site. Residue N278 is glycosylated (N-linked (GlcNAc...) asparagine). E454 provides a ligand contact to FAD.

Belongs to the flavin monoamine oxidase family. Requires FAD as cofactor.

The protein localises to the secreted. Its subcellular location is the extracellular space. The protein resides in the apoplast. It functions in the pathway amine and polyamine degradation; spermine degradation. Functionally, flavoenzyme involved in polyamine back-conversion. Catalyzes the oxidation of the secondary amino group of polyamines, such as spermine and spermidine. The protein is Polyamine oxidase 6 of Oryza sativa subsp. japonica (Rice).